A 131-amino-acid polypeptide reads, in one-letter code: Large ribosomal subunit protein bL19 (131 aa).

The protein belongs to the bacterial ribosomal protein bL19 family.

Functionally, this protein is located at the 30S-50S ribosomal subunit interface and may play a role in the structure and function of the aminoacyl-tRNA binding site. The polypeptide is Large ribosomal subunit protein bL19 (Caulobacter sp. (strain K31)).